A 455-amino-acid chain; its full sequence is Vimentin (455 aa).

Residues 1–87 are head; that stretch reads MASRTNTSSY…GLADAINTEF (87 aa). Residues 87-122 adopt a coiled-coil conformation; the sequence is FKTNRTNEKAEMQHLNDRFASYIDKVRFLEQQNKIL. The coil 1A stretch occupies residues 88-122; it reads KTNRTNEKAEMQHLNDRFASYIDKVRFLEQQNKIL. Residues 94 to 402 form the IF rod domain; sequence EKAEMQHLND…KLLEGEESRI (309 aa). The segment at 123–144 is linker 1; that stretch reads IAELEQMRGKGSSRVGDLYQDE. The stretch at 145 to 236 forms a coiled coil; it reads MRELRRQVDQ…KLHDEELAEL (92 aa). A coil 1B region spans residues 145-236; that stretch reads MRELRRQVDQ…KLHDEELAEL (92 aa). The segment at 237–259 is linker 12; sequence QIQIQEQHVQIDMEVAKPDLTAA. The segment at 260-398 is coil 2; the sequence is LKDVRQQYET…ATYRKLLEGE (139 aa). Residues 294-398 are a coiled coil; that stretch reads ARNNEAIRLA…ATYRKLLEGE (105 aa). The interval 399-455 is tail; that stretch reads ESRITTPFPNLSSLTLRETMKETRPAMDSLSKKVVIKTIETRDGHIINESSQNDDLE.

The protein belongs to the intermediate filament family. In terms of assembly, homomer assembled from elementary dimers. One of the most prominent phosphoproteins in various cells of mesenchymal origin. Phosphorylation is enhanced during cell division, at which time vimentin filaments are significantly reorganized.

Its subcellular location is the cytoplasm. The protein resides in the cytoskeleton. It localises to the nucleus matrix. Its function is as follows. Vimentins are class-III intermediate filaments found in various non-epithelial cells, especially mesenchymal cells. Vimentin is attached to the nucleus, endoplasmic reticulum, and mitochondria, either laterally or terminally. The chain is Vimentin (vim) from Cyprinus carpio (Common carp).